Consider the following 54-residue polypeptide: Ovomucoid (54 aa).

A Kazal-like domain is found at 4 to 54 (VDCSDYPKPACLLEYMPLCGSDNKTYDNKCSFCNAVVDSNGTLSLSHFGKC). 3 cysteine pairs are disulfide-bonded: cysteine 6/cysteine 36, cysteine 14/cysteine 33, and cysteine 22/cysteine 54. A glycan (N-linked (GlcNAc...) asparagine) is linked at asparagine 43.

It localises to the secreted. In Opisthocomus hoazin (Hoatzin), this protein is Ovomucoid.